Reading from the N-terminus, the 475-residue chain is Ribulose bisphosphate carboxylase large chain (475 aa).

The propeptide occupies 1–2 (MA). Residue P3 is modified to N-acetylproline. N6,N6,N6-trimethyllysine is present on K14. Residues N123 and T173 each contribute to the substrate site. K175 serves as the catalytic Proton acceptor. Position 177 (K177) interacts with substrate. Mg(2+)-binding residues include K201, D203, and E204. An N6-carboxylysine modification is found at K201. H294 acts as the Proton acceptor in catalysis. Residues R295, H327, and S379 each coordinate substrate.

The protein belongs to the RuBisCO large chain family. Type I subfamily. As to quaternary structure, heterohexadecamer of 8 large chains and 8 small chains; disulfide-linked. The disulfide link is formed within the large subunit homodimers. The cofactor is Mg(2+). Post-translationally, the disulfide bond which can form in the large chain dimeric partners within the hexadecamer appears to be associated with oxidative stress and protein turnover.

It is found in the plastid. The protein localises to the chloroplast. It carries out the reaction 2 (2R)-3-phosphoglycerate + 2 H(+) = D-ribulose 1,5-bisphosphate + CO2 + H2O. The catalysed reaction is D-ribulose 1,5-bisphosphate + O2 = 2-phosphoglycolate + (2R)-3-phosphoglycerate + 2 H(+). In terms of biological role, ruBisCO catalyzes two reactions: the carboxylation of D-ribulose 1,5-bisphosphate, the primary event in carbon dioxide fixation, as well as the oxidative fragmentation of the pentose substrate in the photorespiration process. Both reactions occur simultaneously and in competition at the same active site. In Tupiella akineta (Green alga), this protein is Ribulose bisphosphate carboxylase large chain.